The primary structure comprises 163 residues: Interleukin-17F (163 aa).

The signal sequence occupies residues 1-30 (MTVKSLHVTAMVKYLLLLILGLAFLRETAA). N-linked (GlcNAc...) asparagine glycosylation is present at Asn83. 2 disulfides stabilise this stretch: Cys102–Cys152 and Cys107–Cys154.

The protein belongs to the IL-17 family. In terms of assembly, homodimer; disulfide-linked. Heterodimer with IL17A (IL17A-IL17F). Forms complexes with IL17RA and IL17RC receptors with 2:1 binding stoichiometry: two receptor chains for one interleukin molecule. IL17F homodimer forms predominantly complexes with IL17RC homodimer, whereas IL17A-IL17F favors complexes with IL17RA-IL17RC. IL17RA and IL17RC chains cannot distinguish between IL17A and IL17F molecules, potentially enabling the formation of topologically distinct complexes.

It is found in the secreted. In terms of biological role, effector cytokine of innate and adaptive immune system involved in antimicrobial host defense and maintenance of tissue integrity. IL17A-IL17F signals via IL17RA-IL17RC heterodimeric receptor complex, triggering homotypic interaction of IL17RA and IL17RC chains with TRAF3IP2 adapter through SEFIR domains. This leads to downstream TRAF6-mediated activation of NF-kappa-B and MAPkinase pathways ultimately resulting in transcriptional activation of cytokines, chemokines, antimicrobial peptides and matrix metalloproteinases, with potential strong immune inflammation. IL17A-IL17F is primarily involved in host defense against extracellular bacteria and fungi by inducing neutrophilic inflammation. As signature effector cytokine of T-helper 17 cells (Th17), primarily induces neutrophil activation and recruitment at infection and inflammatory sites. Stimulates the production of antimicrobial beta-defensins DEFB1, DEFB103A, and DEFB104A by mucosal epithelial cells, limiting the entry of microbes through the epithelial barriers. IL17F homodimer can signal via IL17RC homodimeric receptor complex, triggering downstream activation of TRAF6 and NF-kappa-B signaling pathway. Via IL17RC induces transcriptional activation of IL33, a potent cytokine that stimulates group 2 innate lymphoid cells and adaptive T-helper 2 cells involved in pulmonary allergic response to fungi. Likely via IL17RC, promotes sympathetic innervation of peripheral organs by coordinating the communication between gamma-delta T cells and parenchymal cells. Stimulates sympathetic innervation of thermogenic adipose tissue by driving TGFB1 expression. Regulates the composition of intestinal microbiota and immune tolerance by inducing antimicrobial proteins that specifically control the growth of commensal Firmicutes and Bacteroidetes. The protein is Interleukin-17F (IL17F) of Callithrix jacchus (White-tufted-ear marmoset).